The following is a 327-amino-acid chain: Olfactory receptor 226 (327 aa).

Over 1-26 (MERRNHSGRVSEFVLLGFPAPAPLRV) the chain is Extracellular. An N-linked (GlcNAc...) asparagine glycan is attached at Asn-5. Residues 27–50 (LLFFLSLLAYVLVLTENMLIIIAI) traverse the membrane as a helical segment. The Cytoplasmic segment spans residues 51 to 58 (RNHPTLHK). A helical transmembrane segment spans residues 59–80 (PMYFFLANMSFLEIWYVTVTIP). Residues 81–104 (KMLAGFIGSKENHGQLISFEACMT) lie on the Extracellular side of the membrane. An intrachain disulfide couples Cys-102 to Cys-194. The chain crosses the membrane as a helical span at residues 105–125 (QLYFFLGLGCTECVLLAVMAY). At 126–144 (DRYVAICHPLHYPVIVSSR) the chain is on the cytoplasmic side. A helical transmembrane segment spans residues 145–163 (LCVQMAAGSWAGGFGISMV). At 164 to 201 (KVFLISRLSYCGPNTINHFFCDVSPLLNLSCTDMSTAE) the chain is on the extracellular side. A helical transmembrane segment spans residues 202–224 (LTDFVLAIFILLGPLSVTGASYM). Residues 225 to 241 (AITGAVMRIPSAAGRHK) are Cytoplasmic-facing. The helical transmembrane segment at 242–265 (AFSTCASHLTVVIIFYAASIFIYA) threads the bilayer. Residues 266-277 (RPKALSAFDTNK) are Extracellular-facing. A helical transmembrane segment spans residues 278–297 (LVSVLYAVIVPLFNPIIYCL). Residues 298-327 (RNQDVKRALRRTLHLAQDQEANTNKGSKNG) lie on the Cytoplasmic side of the membrane.

The protein belongs to the G-protein coupled receptor 1 family. As to expression, olfactory epithelium.

It is found in the cell membrane. Its function is as follows. Odorant receptor. The protein is Olfactory receptor 226 (Olr226) of Rattus norvegicus (Rat).